The following is a 278-amino-acid chain: Small ribosomal subunit protein uS3 (278 aa).

In terms of domain architecture, KH type-2 spans I38–K106. Residues A215–S278 form a disordered region. Residues S238–S278 show a composition bias toward low complexity.

This sequence belongs to the universal ribosomal protein uS3 family. As to quaternary structure, part of the 30S ribosomal subunit. Forms a tight complex with proteins S10 and S14.

Its function is as follows. Binds the lower part of the 30S subunit head. Binds mRNA in the 70S ribosome, positioning it for translation. This Mycolicibacterium gilvum (strain PYR-GCK) (Mycobacterium gilvum (strain PYR-GCK)) protein is Small ribosomal subunit protein uS3.